The sequence spans 232 residues: U-scoloptoxin(11)-Sa3a (232 aa).

The N-terminal stretch at 1 to 21 is a signal peptide; that stretch reads MFQFCLLILLLAPGRFFSALG.

The protein belongs to the scoloptoxin-11 family. Post-translationally, contains 8 disulfide bonds. In terms of tissue distribution, expressed by the venom gland.

It localises to the secreted. The protein is U-scoloptoxin(11)-Sa3a of Scolopendra alternans (Florida Keys giant centipede).